We begin with the raw amino-acid sequence, 147 residues long: Lysozyme C (147 aa).

Positions Met1–Gly18 are cleaved as a signal peptide. One can recognise a C-type lysozyme domain in the interval Lys19 to Leu147. Cystine bridges form between Cys24-Cys145, Cys48-Cys133, Cys82-Cys98, and Cys94-Cys112. Residues Glu53 and Asp70 contribute to the active site. Asp119 is a binding site for substrate.

This sequence belongs to the glycosyl hydrolase 22 family. In terms of assembly, monomer. As to expression, in the egg white and polymorphonuclear leukocytes.

It is found in the secreted. It catalyses the reaction Hydrolysis of (1-&gt;4)-beta-linkages between N-acetylmuramic acid and N-acetyl-D-glucosamine residues in a peptidoglycan and between N-acetyl-D-glucosamine residues in chitodextrins.. In terms of biological role, lysozymes have primarily a bacteriolytic function; those in tissues and body fluids are associated with the monocyte-macrophage system and enhance the activity of immunoagents. Has bacteriolytic activity against M.luteus. This Gallus gallus (Chicken) protein is Lysozyme C (LYZ).